We begin with the raw amino-acid sequence, 95 residues long: uncharacterized protein (95 aa).

A helical membrane pass occupies residues 45–65; it reads WLSGLAFVLQAALVMPVVLAF.

The protein resides in the membrane. This is an uncharacterized protein from Mycobacterium leprae (strain TN).